A 232-amino-acid chain; its full sequence is Thiamine import ATP-binding protein ThiQ (232 aa).

Positions 2 to 230 (LKLTDITWLY…KASASALLGI (229 aa)) constitute an ABC transporter domain. ATP is bound at residue 32 to 39 (GPSGAGKS).

Belongs to the ABC transporter superfamily. Thiamine importer (TC 3.A.1.19.1) family. The complex is composed of two ATP-binding proteins (ThiQ), two transmembrane proteins (ThiP) and a solute-binding protein (ThiB).

Its subcellular location is the cell inner membrane. The enzyme catalyses thiamine(out) + ATP + H2O = thiamine(in) + ADP + phosphate + H(+). In terms of biological role, part of the ABC transporter complex ThiBPQ involved in thiamine import. Responsible for energy coupling to the transport system. This is Thiamine import ATP-binding protein ThiQ from Escherichia coli O6:K15:H31 (strain 536 / UPEC).